Here is a 295-residue protein sequence, read N- to C-terminus: MSNPYQNSQNGYQQNNSYELNNYPNKQYSSSNEDDFVQFMNEIQDINSQLDNYSNIINLIDNKQKNFLHGLDLNDEDTDYDSKQIENLVNEAQSLQLDLKNRIKNVQTQAVHSRDQTKVDQAETCRKRFLDLIQDYRLVEARNKESTKEQAARQYQIIKPDATDEEIKAVVEDGSQQYFQQALMQSNRRGEARSVLNEVQVRHRELLKLEKTMAELTQLFHDMEELVIEQDQPIQQIEEQVGTAQHDIEQGVGHTNKAVKSAKSARKKKLWCFFICLLIVIILAVILGAYFGTRK.

The segment covering 1–18 (MSNPYQNSQNGYQQNNSY) has biased composition (low complexity). The disordered stretch occupies residues 1–31 (MSNPYQNSQNGYQQNNSYELNNYPNKQYSSS). Residues 1-270 (MSNPYQNSQN…SAKSARKKKL (270 aa)) are Cytoplasmic-facing. Residues 19 to 31 (ELNNYPNKQYSSS) show a composition bias toward polar residues. Residues 33 to 110 (EDDFVQFMNE…NRIKNVQTQA (78 aa)) adopt a coiled-coil conformation. A t-SNARE coiled-coil homology domain is found at 196-258 (LNEVQVRHRE…EQGVGHTNKA (63 aa)). A helical; Anchor for type IV membrane protein membrane pass occupies residues 271–291 (WCFFICLLIVIILAVILGAYF). Topologically, residues 292–295 (GTRK) are extracellular.

This sequence belongs to the syntaxin family.

The protein resides in the membrane. Its function is as follows. Late secretory t-SNARE protein required for secretion and proper cytokinesis. Plays an important role in the secretion of virulence-associated extracellular enzymes and vesicle-mediated polarized hyphal growth. This Candida albicans (strain SC5314 / ATCC MYA-2876) (Yeast) protein is Protein transport protein SSO2 (SSO2).